The following is a 310-amino-acid chain: MNGLSVTELCCLFCCPPCPGRIAAKLAFLPPEPTYSLVPEPEPGPGGAGAAPSGNLRALAGTPGRWKLHLMERADFQYSQRELDTIEVFLTKSSRGNRISCMYVRCVPGARYTVFFSHGNAVDLGQMSSFYIGLGTRINCNIFSYDYSGYGVSSGKPSEKNLYADIDAAWQALRTRYGISPDSIVLYGQSIGTVPTVDLASRYECAAVVLHSPLTSGMRVAFPDTKKTYCFDAFPNIEKVSKITSPVLIIHGTEDEVIDFSHGLALYERCPKAVEPLWVEGAGHNDIELYSQYLERLRRFISQELPSQRA.

Residues Ser-190, Asp-255, and His-284 each act as charge relay system in the active site. Ser-307 bears the Phosphoserine mark.

This sequence belongs to the AB hydrolase superfamily. ABHD17 family. Post-translationally, palmitoylated on cysteine residues located in a cysteine cluster at the N-terminus which promotes membrane localization. Palmitoylation is required for post-synaptic localization and for depalmitoylating activity towards DLG4/PSD95.

The protein localises to the cell membrane. It localises to the endosome membrane. It is found in the cell projection. The protein resides in the dendritic spine. Its subcellular location is the postsynaptic density membrane. It carries out the reaction S-hexadecanoyl-L-cysteinyl-[protein] + H2O = L-cysteinyl-[protein] + hexadecanoate + H(+). Its function is as follows. Hydrolyzes fatty acids from S-acylated cysteine residues in proteins. Has depalmitoylating activity towards NRAS. Has depalmitoylating activity towards DLG4/PSD95. May have depalmitoylating activity towards MAP6. This Bos taurus (Bovine) protein is Alpha/beta hydrolase domain-containing protein 17A.